We begin with the raw amino-acid sequence, 295 residues long: Pyridoxal 5'-phosphate synthase subunit PdxS (295 aa).

D25 is a D-ribose 5-phosphate binding site. The active-site Schiff-base intermediate with D-ribose 5-phosphate is the K82. G154 serves as a coordination point for D-ribose 5-phosphate. Position 166 (R166) interacts with D-glyceraldehyde 3-phosphate. Residues G215 and 236-237 each bind D-ribose 5-phosphate; that span reads GS.

The protein belongs to the PdxS/SNZ family. In the presence of PdxT, forms a dodecamer of heterodimers.

The enzyme catalyses aldehydo-D-ribose 5-phosphate + D-glyceraldehyde 3-phosphate + L-glutamine = pyridoxal 5'-phosphate + L-glutamate + phosphate + 3 H2O + H(+). Its pathway is cofactor biosynthesis; pyridoxal 5'-phosphate biosynthesis. In terms of biological role, catalyzes the formation of pyridoxal 5'-phosphate from ribose 5-phosphate (RBP), glyceraldehyde 3-phosphate (G3P) and ammonia. The ammonia is provided by the PdxT subunit. Can also use ribulose 5-phosphate and dihydroxyacetone phosphate as substrates, resulting from enzyme-catalyzed isomerization of RBP and G3P, respectively. The protein is Pyridoxal 5'-phosphate synthase subunit PdxS of Oceanobacillus iheyensis (strain DSM 14371 / CIP 107618 / JCM 11309 / KCTC 3954 / HTE831).